Here is a 612-residue protein sequence, read N- to C-terminus: Actin-binding LIM protein 2 (612 aa).

LIM zinc-binding domains are found at residues 22 to 81 (ILCN…LYGT), 81 to 141 (TRCF…TLLG), 151 to 210 (RSCG…KFGI), and 210 to 270 (IRCD…ARTE). Zn(2+)-binding residues include C83, C86, H103, C106, C109, C112, C131, and C134. Zn(2+)-binding residues include C212, C215, H232, C235, C238, C241, H260, and C263. The span at 269–278 (TEDKSKETRT) shows a compositional bias: basic and acidic residues. 2 disordered regions span residues 269 to 295 (TEDK…SGSP) and 341 to 433 (AVGD…DNIY). Residues 279-295 (SSESIVSVPASSTSGSP) show a composition bias toward low complexity. A phosphoserine mark is found at S282, S294, G351, R356, S365, and S368. The span at 364–373 (SSPSSAGSVS) shows a compositional bias: low complexity. A compositionally biased stretch (polar residues) spans 394–416 (SGRSTPSLSVHSDSRPPSSTYQQ). A Phosphoserine modification is found at S453. A disordered region spans residues 471-498 (ADTRTNSPDLDSQSLSLSSGTDQEPLQR). T473 is subject to Phosphothreonine. A phosphoserine mark is found at S477 and S579. Over residues 477-489 (SPDLDSQSLSLSS) the composition is skewed to low complexity. The HP domain occupies 544–612 (TREYKIYPYD…NDLKKKALLF (69 aa)).

Interacts with F-actin and ABRA. In terms of tissue distribution, expressed in brain. Highly expressed in caudate/putamen, moderately expressed in the olfactory bulb. In the hippocampus, expressed in the CA1, CA2 and CA3 fields. In the cerebellum, expressed in Purkinje cells.

The protein localises to the cytoplasm. Functionally, may act as scaffold protein. May stimulate ABRA activity and ABRA-dependent SRF transcriptional activity. The polypeptide is Actin-binding LIM protein 2 (Ablim2) (Mus musculus (Mouse)).